Reading from the N-terminus, the 384-residue chain is 8-amino-7-oxononanoate synthase (384 aa).

Arginine 21 is a substrate binding site. 108 to 109 lines the pyridoxal 5'-phosphate pocket; it reads GF. Residue histidine 133 participates in substrate binding. Residues serine 179, histidine 207, and threonine 233 each coordinate pyridoxal 5'-phosphate. Lysine 236 carries the N6-(pyridoxal phosphate)lysine modification. Threonine 352 contributes to the substrate binding site.

This sequence belongs to the class-II pyridoxal-phosphate-dependent aminotransferase family. BioF subfamily. In terms of assembly, homodimer. The cofactor is pyridoxal 5'-phosphate.

It carries out the reaction 6-carboxyhexanoyl-[ACP] + L-alanine + H(+) = (8S)-8-amino-7-oxononanoate + holo-[ACP] + CO2. It participates in cofactor biosynthesis; biotin biosynthesis. Catalyzes the decarboxylative condensation of pimeloyl-[acyl-carrier protein] and L-alanine to produce 8-amino-7-oxononanoate (AON), [acyl-carrier protein], and carbon dioxide. This chain is 8-amino-7-oxononanoate synthase, found in Escherichia coli O6:H1 (strain CFT073 / ATCC 700928 / UPEC).